Here is a 177-residue protein sequence, read N- to C-terminus: Ubiquinol-cytochrome c reductase iron-sulfur subunit (177 aa).

A helical membrane pass occupies residues Ile18–Ile38. The region spanning Ala88–Arg175 is the Rieske domain. [2Fe-2S] cluster contacts are provided by Cys120, His122, Cys139, and His142. Cys125 and Cys141 are joined by a disulfide.

Belongs to the Rieske iron-sulfur protein family. As to quaternary structure, the main subunits of complex b-c1 are: cytochrome b, cytochrome c1 and the Rieske protein. Requires [2Fe-2S] cluster as cofactor.

It localises to the cell membrane. The catalysed reaction is a quinol + 2 Fe(III)-[cytochrome c](out) = a quinone + 2 Fe(II)-[cytochrome c](out) + 2 H(+)(out). In terms of biological role, component of the ubiquinol-cytochrome c reductase complex (complex III or cytochrome b-c1 complex), which is a respiratory chain that generates an electrochemical potential coupled to ATP synthesis. In Rickettsia prowazekii (strain Madrid E), this protein is Ubiquinol-cytochrome c reductase iron-sulfur subunit (petA).